The following is a 121-amino-acid chain: Small ribosomal subunit protein uS11 (121 aa).

Belongs to the universal ribosomal protein uS11 family. Part of the 30S ribosomal subunit. Interacts with proteins S7 and S18. Binds to IF-3.

Located on the platform of the 30S subunit, it bridges several disparate RNA helices of the 16S rRNA. Forms part of the Shine-Dalgarno cleft in the 70S ribosome. The protein is Small ribosomal subunit protein uS11 of Mycoplasma genitalium (strain ATCC 33530 / DSM 19775 / NCTC 10195 / G37) (Mycoplasmoides genitalium).